Here is a 63-residue protein sequence, read N- to C-terminus: Large ribosomal subunit protein uL29 (63 aa).

This sequence belongs to the universal ribosomal protein uL29 family.

This Yersinia enterocolitica serotype O:8 / biotype 1B (strain NCTC 13174 / 8081) protein is Large ribosomal subunit protein uL29.